The chain runs to 137 residues: MGDWKGYISAVLRDQRIDDVAIVGHSDNRCVWASRPGGLLAAISPQEVGVLTGPDRSTFLQAGLCVAGRRCCVIRDHLLAEGDGVLDARTKGLDGRAICVGHTPRALLVLMGRRGVHGGILNKTMHELIHGLRSQGT.

Belongs to the profilin family. In terms of assembly, interacts with ACTRT3.

It localises to the cytoplasm. Its subcellular location is the cytoskeleton. It is found in the nucleus. Functionally, binds to actin and affects the structure of the cytoskeleton. Binds to poly-L-proline, phosphatidylinositol 3-phosphate (PtdIns(3)P), phosphatidylinositol 4,5-bisphosphate (PtdIns(4,5)P2) and phosphatidylinositol 4-phosphate (PtdIns(4)P). Slightly reduces actin polymerization. May be involved in spermatogenesis. The protein is Profilin-3 (PFN3) of Bos taurus (Bovine).